We begin with the raw amino-acid sequence, 465 residues long: Opioid growth factor receptor-like protein 1 (465 aa).

2 disordered regions span residues 1-89 (MGNL…GNAK) and 309-465 (ENFI…TSSG). 4 stretches are compositionally biased toward basic and acidic residues: residues 48-59 (REQPEQPPERAG), 316-325 (PKKEQPERSK), 363-396 (TVEE…RNSE), and 426-440 (SEKD…KDSE). Positions 442 to 465 (PENTSCHAEVVSQQNVTNPQTSSG) are enriched in polar residues.

Belongs to the opioid growth factor receptor family.

The sequence is that of Opioid growth factor receptor-like protein 1 (Ogfrl1) from Rattus norvegicus (Rat).